We begin with the raw amino-acid sequence, 527 residues long: GMP synthase [glutamine-hydrolyzing] (527 aa).

Positions 20-208 (SVVILDYGSQ…LFDVCGCAPT (189 aa)) constitute a Glutamine amidotransferase type-1 domain. Catalysis depends on cysteine 97, which acts as the Nucleophile. Catalysis depends on residues histidine 182 and glutamate 184. Residues 209 to 402 (WTAESFVEQA…LGLPEEIVQR (194 aa)) form the GMPS ATP-PPase domain. 236–242 (SGGVDSS) lines the ATP pocket.

In terms of assembly, homodimer.

It carries out the reaction XMP + L-glutamine + ATP + H2O = GMP + L-glutamate + AMP + diphosphate + 2 H(+). It functions in the pathway purine metabolism; GMP biosynthesis; GMP from XMP (L-Gln route): step 1/1. Catalyzes the synthesis of GMP from XMP. The sequence is that of GMP synthase [glutamine-hydrolyzing] from Thermomicrobium roseum (strain ATCC 27502 / DSM 5159 / P-2).